We begin with the raw amino-acid sequence, 542 residues long: CTP synthase (542 aa).

Positions 1-265 are amidoligase domain; it reads MARYVFITGG…DSEVLSAFGI (265 aa). S13 serves as a coordination point for CTP. S13 is a UTP binding site. 14-19 contributes to the ATP binding site; the sequence is SLGKGI. Y54 serves as a coordination point for L-glutamine. D71 provides a ligand contact to ATP. Positions 71 and 139 each coordinate Mg(2+). CTP is bound by residues 146 to 148, 186 to 191, and K222; these read DIE and KTKPTQ. UTP-binding positions include 186–191 and K222; that span reads KTKPTQ. The 251-residue stretch at 291 to 541 folds into the Glutamine amidotransferase type-1 domain; sequence TIAVVGKYTG…IEAAIEQSRL (251 aa). Position 353 (G353) interacts with L-glutamine. C380 acts as the Nucleophile; for glutamine hydrolysis in catalysis. L-glutamine contacts are provided by residues 381–384, E404, and R469; that span reads FGMQ. Catalysis depends on residues H514 and E516.

This sequence belongs to the CTP synthase family. As to quaternary structure, homotetramer.

The enzyme catalyses UTP + L-glutamine + ATP + H2O = CTP + L-glutamate + ADP + phosphate + 2 H(+). It carries out the reaction L-glutamine + H2O = L-glutamate + NH4(+). The catalysed reaction is UTP + NH4(+) + ATP = CTP + ADP + phosphate + 2 H(+). The protein operates within pyrimidine metabolism; CTP biosynthesis via de novo pathway; CTP from UDP: step 2/2. Its activity is regulated as follows. Allosterically activated by GTP, when glutamine is the substrate; GTP has no effect on the reaction when ammonia is the substrate. The allosteric effector GTP functions by stabilizing the protein conformation that binds the tetrahedral intermediate(s) formed during glutamine hydrolysis. Inhibited by the product CTP, via allosteric rather than competitive inhibition. In terms of biological role, catalyzes the ATP-dependent amination of UTP to CTP with either L-glutamine or ammonia as the source of nitrogen. Regulates intracellular CTP levels through interactions with the four ribonucleotide triphosphates. This Brucella abortus (strain 2308) protein is CTP synthase.